We begin with the raw amino-acid sequence, 465 residues long: Ribulose bisphosphate carboxylase large chain (465 aa).

Lys-4 bears the N6,N6,N6-trimethyllysine mark. Asn-113 and Thr-163 together coordinate substrate. Lys-165 functions as the Proton acceptor in the catalytic mechanism. Residue Lys-167 coordinates substrate. Residues Lys-191, Asp-193, and Glu-194 each contribute to the Mg(2+) site. Residue Lys-191 is modified to N6-carboxylysine. The active-site Proton acceptor is His-284. Substrate is bound by residues Arg-285, His-317, and Ser-369.

This sequence belongs to the RuBisCO large chain family. Type I subfamily. As to quaternary structure, heterohexadecamer of 8 large chains and 8 small chains; disulfide-linked. The disulfide link is formed within the large subunit homodimers. Mg(2+) serves as cofactor. The disulfide bond which can form in the large chain dimeric partners within the hexadecamer appears to be associated with oxidative stress and protein turnover.

It is found in the plastid. The protein localises to the chloroplast. The catalysed reaction is 2 (2R)-3-phosphoglycerate + 2 H(+) = D-ribulose 1,5-bisphosphate + CO2 + H2O. It carries out the reaction D-ribulose 1,5-bisphosphate + O2 = 2-phosphoglycolate + (2R)-3-phosphoglycerate + 2 H(+). Its function is as follows. RuBisCO catalyzes two reactions: the carboxylation of D-ribulose 1,5-bisphosphate, the primary event in carbon dioxide fixation, as well as the oxidative fragmentation of the pentose substrate in the photorespiration process. Both reactions occur simultaneously and in competition at the same active site. The chain is Ribulose bisphosphate carboxylase large chain from Combretum indicum (Rangoon creeper).